The primary structure comprises 185 residues: Ribosome-recycling factor (185 aa).

The protein belongs to the RRF family.

It localises to the cytoplasm. Responsible for the release of ribosomes from messenger RNA at the termination of protein biosynthesis. May increase the efficiency of translation by recycling ribosomes from one round of translation to another. The chain is Ribosome-recycling factor from Neisseria gonorrhoeae (strain ATCC 700825 / FA 1090).